Consider the following 364-residue polypeptide: Mitoferrin-2 (364 aa).

Over residues 1-17 (MELEGRGAGGVAGGPAA) the composition is skewed to gly residues. Disordered regions lie at residues 1-28 (MELE…ESAL) and 40-60 (GAGG…PDSG). The segment covering 18 to 27 (GPGRSPGESA) has biased composition (low complexity). Solcar repeat units lie at residues 70–158 (ATVT…LKKT), 168–252 (NSHI…LQEH), and 259–352 (YNPS…FKYL). 6 helical membrane-spanning segments follow: residues 72–91 (VTTH…CVMY), 133–152 (GLNV…FACY), 170–189 (HIAN…AAMN), 227–246 (SYTT…FMTY), 261–280 (PSSH…AATT), and 327–346 (GVQA…WSVY).

It belongs to the mitochondrial carrier (TC 2.A.29) family. In terms of tissue distribution, ubiquitous. Expressed in placenta, lung, kidney, pancreas, liver, brain, skeletal muscle and heart.

It is found in the mitochondrion inner membrane. The catalysed reaction is Fe(2+)(in) = Fe(2+)(out). Its function is as follows. Mitochondrial iron transporter that mediates iron uptake. Probably required for heme synthesis of hemoproteins and Fe-S cluster assembly in non-erythroid cells. The sequence is that of Mitoferrin-2 (SLC25A28) from Homo sapiens (Human).